The sequence spans 404 residues: Diaminopropionate ammonia-lyase (404 aa).

An N6-(pyridoxal phosphate)lysine modification is found at lysine 78.

This sequence belongs to the diaminopropionate ammonia-lyase family. In terms of assembly, homodimer. Requires pyridoxal 5'-phosphate as cofactor.

It carries out the reaction (S)-2,3-diaminopropanoate + H2O + H(+) = pyruvate + 2 NH4(+). The catalysed reaction is (R)-2,3-diaminopropanoate + H2O + H(+) = pyruvate + 2 NH4(+). Its activity is regulated as follows. Competitively inhibited by L- and D-alanine. In terms of biological role, catalyzes the alpha,beta-elimination reaction of both L- and D-alpha,beta-diaminopropionate (DAP) to form pyruvate and ammonia. In vitro L- and D-isomers of serine are also degraded, though slowly; it is the only serine dehydratase which can eliminate an amino group at the beta-carbon position. In vivo L-, D- and a mixure of DL-DAP allow growth. DL-DAP is toxic in the absence of this enzyme, it may inhibit enzymes involved in the synthesis of pyruvate and aspartate, as well as amino acids derived from them. The sequence is that of Diaminopropionate ammonia-lyase (dpaL) from Salmonella typhimurium (strain LT2 / SGSC1412 / ATCC 700720).